The sequence spans 478 residues: Glycogen synthase (478 aa).

Lys15 lines the ADP-alpha-D-glucose pocket.

Belongs to the glycosyltransferase 1 family. Bacterial/plant glycogen synthase subfamily.

It carries out the reaction [(1-&gt;4)-alpha-D-glucosyl](n) + ADP-alpha-D-glucose = [(1-&gt;4)-alpha-D-glucosyl](n+1) + ADP + H(+). Its pathway is glycan biosynthesis; glycogen biosynthesis. Functionally, synthesizes alpha-1,4-glucan chains using ADP-glucose. The protein is Glycogen synthase of Enterobacter sp. (strain 638).